The following is an 85-amino-acid chain: UPF0297 protein LBA0418 (85 aa).

This sequence belongs to the UPF0297 family.

This chain is UPF0297 protein LBA0418, found in Lactobacillus acidophilus (strain ATCC 700396 / NCK56 / N2 / NCFM).